The primary structure comprises 312 residues: Deoxycytidylate deaminase (312 aa).

Residues 162–291 (SWDSYFMKLA…RMDEESFKVL (130 aa)) form the CMP/dCMP-type deaminase domain. Residue histidine 233 coordinates Zn(2+). Glutamate 235 acts as the Proton donor in catalysis. Positions 260 and 263 each coordinate Zn(2+).

This sequence belongs to the cytidine and deoxycytidylate deaminase family. Zn(2+) serves as cofactor.

The catalysed reaction is dCMP + H2O + H(+) = dUMP + NH4(+). With respect to regulation, allosteric enzyme whose activity is greatly influenced by the end products of its metabolic pathway, dCTP and dTTP. Its function is as follows. Catalyzes the hydrolytic deamination of dCMP to yield dUMP, the nucleotide substrate for thymidylate synthetase. The chain is Deoxycytidylate deaminase from Saccharomyces cerevisiae (strain ATCC 204508 / S288c) (Baker's yeast).